A 59-amino-acid polypeptide reads, in one-letter code: Potassium channel toxin alpha-KTx 4.1 (59 aa).

Positions 1–22 are cleaved as a signal peptide; that stretch reads MKAFYGILIIFILISMIDLSKQ. Cystine bridges form between Cys-29-Cys-50, Cys-35-Cys-55, and Cys-39-Cys-57. Residues 48–55 form an interaction with Ca(2+)-activated K(+) channels region; that stretch reads GKCMNGKC.

It belongs to the short scorpion toxin superfamily. Potassium channel inhibitor family. Alpha-KTx 04 subfamily. Expressed by the venom gland.

It is found in the secreted. Functionally, potently blocks Kv1.1/KCNA1 (85%), Kv1.2/KCNA2 (91%), Kv1.3/KCNA3 (89%), Kv1.6/KCNA6 (94%), and Shaker (97%). The polypeptide is Potassium channel toxin alpha-KTx 4.1 (Tityus serrulatus (Brazilian scorpion)).